We begin with the raw amino-acid sequence, 349 residues long: N-acetyltaurine hydrolase (349 aa).

A divalent metal cation is bound by residues H26, H28, E169, H201, H230, and D298.

The protein belongs to the metallo-dependent hydrolases superfamily. Phosphotriesterase family. A divalent metal cation is required as a cofactor.

The protein resides in the cytoplasm. It localises to the cytosol. The enzyme catalyses N-acetyltaurine + H2O = taurine + acetate. It catalyses the reaction N-propanoyltaurine + H2O = propanoate + taurine. The catalysed reaction is N-acetyl-L-methionine + H2O = L-methionine + acetate. It carries out the reaction N-acetyl-L-isoleucine + H2O = L-isoleucine + acetate. The enzyme catalyses N-acetyl-L-leucine + H2O = L-leucine + acetate. It catalyses the reaction N-acetyl-L-valine + H2O = L-valine + acetate. N-acetyltaurine hydrolase that regulates feeding by catalyzing the hydrolysis of N-acetyltaurine into taurine and acetate. N-acetyltaurine has anorexigenic and anti-obesity effects that are dependent on GFRAL receptor and GDF15. PTER also acts on other N-acetyl amino acids (Met, Ile, Leu, Val) and N-propionyltaurine, but at lower rates. The chain is N-acetyltaurine hydrolase (PTER) from Bos taurus (Bovine).